We begin with the raw amino-acid sequence, 336 residues long: Putative bifunctional cytochrome c-type biogenesis protein CcmAE (336 aa).

Positions 1–199 (MLEARDLYCE…ADTVRRLALT (199 aa)) are cytochrome c biogenesis ATP-binding export protein CcmA 2. The 241-residue stretch at 2 to 242 (LEARDLYCER…VGQRLRVGGM (241 aa)) folds into the ABC transporter domain. 34-41 (GGNGAGKT) serves as a coordination point for ATP. Residues 196–336 (LALTTALVLY…PQRVDKDTSS (141 aa)) form a cytochrome c-type biogenesis protein CcmE 2 region. Heme-binding residues include His-307 and Tyr-311. Residues 307–336 (HDENYTPPEVEKAMQENHRRPQRVDKDTSS) are disordered.

This sequence in the N-terminal section; belongs to the ABC transporter superfamily. CcmA exporter (TC 3.A.1.107) family. It in the C-terminal section; belongs to the CcmE/CycJ family.

It is found in the cell inner membrane. It catalyses the reaction heme b(in) + ATP + H2O = heme b(out) + ADP + phosphate + H(+). In terms of biological role, part of the ABC transporter complex CcmAB involved in the biogenesis of c-type cytochromes; once thought to export heme, this seems not to be the case, but its exact role is uncertain. Responsible for energy coupling to the transport system. Functionally, heme chaperone required for the biogenesis of c-type cytochromes. Transiently binds heme delivered by CcmC and transfers the heme to apo-cytochromes in a process facilitated by CcmF and CcmH. This Salmonella choleraesuis (strain SC-B67) protein is Putative bifunctional cytochrome c-type biogenesis protein CcmAE (ccmAE).